Consider the following 192-residue polypeptide: uncharacterized protein (192 aa).

A Nudix hydrolase domain is found at 29-160; the sequence is HRQAAVLIPI…PLDIYRRGDS (132 aa). The Nudix box signature appears at 67 to 89; that stretch reads GAVDDTDASVIAAALREAEEEVA. 2 residues coordinate Mg(2+): E83 and E87.

It belongs to the Nudix hydrolase family. PCD1 subfamily. It depends on Mn(2+) as a cofactor. Mg(2+) is required as a cofactor.

Functionally, probably mediates the hydrolysis of some nucleoside diphosphate derivatives. This is an uncharacterized protein from Shigella flexneri serotype 5b (strain 8401).